We begin with the raw amino-acid sequence, 376 residues long: Putative glutamate--cysteine ligase 2 (376 aa).

It belongs to the glutamate--cysteine ligase type 2 family. YbdK subfamily.

The catalysed reaction is L-cysteine + L-glutamate + ATP = gamma-L-glutamyl-L-cysteine + ADP + phosphate + H(+). ATP-dependent carboxylate-amine ligase which exhibits weak glutamate--cysteine ligase activity. This chain is Putative glutamate--cysteine ligase 2, found in Mycolicibacterium paratuberculosis (strain ATCC BAA-968 / K-10) (Mycobacterium paratuberculosis).